A 237-amino-acid polypeptide reads, in one-letter code: RNA polymerase sigma-28 factor (237 aa).

Residues 1-19 (MSLFAAIGYMVREVFVFVS) constitute a propeptide that is removed on maturation. A Polymerase core binding motif is present at residues 77–90 (DLISIGTIGLIKAI). A DNA-binding region (H-T-H motif) is located at residues 197–206 (QREIAKALGI).

It belongs to the sigma-70 factor family. In terms of processing, proteolytically cleaved in the N-terminus probably by a SpoIIGA homolog to yield the active peptide.

Functionally, sigma factors are initiation factors that promote the attachment of RNA polymerase to specific initiation sites and are then released. This sigma factor directs the transcription of crystal protein genes, a sporulation-regulated event. The protein is RNA polymerase sigma-28 factor (sigK) of Bacillus thuringiensis subsp. kurstaki.